Here is a 471-residue protein sequence, read N- to C-terminus: 3-isopropylmalate dehydratase large subunit (471 aa).

The [4Fe-4S] cluster site is built by cysteine 347, cysteine 407, and cysteine 410. The interval 417–443 is disordered; the sequence is TLQPGERSASTSNRNFEGRQGKGGRTH.

Belongs to the aconitase/IPM isomerase family. LeuC type 1 subfamily. Heterodimer of LeuC and LeuD. [4Fe-4S] cluster serves as cofactor.

The enzyme catalyses (2R,3S)-3-isopropylmalate = (2S)-2-isopropylmalate. It participates in amino-acid biosynthesis; L-leucine biosynthesis; L-leucine from 3-methyl-2-oxobutanoate: step 2/4. In terms of biological role, catalyzes the isomerization between 2-isopropylmalate and 3-isopropylmalate, via the formation of 2-isopropylmaleate. This chain is 3-isopropylmalate dehydratase large subunit, found in Nocardioides sp. (strain ATCC BAA-499 / JS614).